Consider the following 278-residue polypeptide: Trehalose monomycolate transport factor A (278 aa).

Met1 is a topological domain (periplasmic). A helical transmembrane segment spans residues 2–22 (VPLWFTLSALCFVGAAVLLYV). Topologically, residues 23–278 (DIDRRRGLGR…NGREASHFQR (256 aa)) are cytoplasmic. The disordered stretch occupies residues 200-278 (PPVPQNGSQA…NGREASHFQR (79 aa)). The segment covering 269-278 (NGREASHFQR) has biased composition (basic and acidic residues).

Monomer. Interacts (via N-terminus) with MmpL3; active trehalose monomycolate (TMM) biosynthesis is not required for the complex formation. Interacts with MSMEG_5308.

It localises to the cell inner membrane. The protein localises to the cell septum. The protein resides in the cell tip. In terms of biological role, required for MmpL3-dependent trehalose monomycolate (TMM) transport to the cell wall. Required for growth and cell elongation. This Mycolicibacterium smegmatis (strain ATCC 700084 / mc(2)155) (Mycobacterium smegmatis) protein is Trehalose monomycolate transport factor A.